Reading from the N-terminus, the 1108-residue chain is Retinal guanylyl cyclase 2 (1108 aa).

An N-terminal signal peptide occupies residues 1-50 (MFLGLGRFSRLVLWFAAFRKLLGHHGLASAKFLWCLCLLSVMSLPQQVWT). The Extracellular segment spans residues 51–467 (LPYKIGVVGP…KICHGGIDPA (417 aa)). A disulfide bond links cysteine 104 and cysteine 132. The chain crosses the membrane as a helical span at residues 468-490 (FAMMVCLTLLIALLSINGFAYFI). Residues 491–1108 (RRRINKIQLI…AERQLVRNKP (618 aa)) are Cytoplasmic-facing. The region spanning 532 to 812 (FQITSEVQSG…DEIFNQFKTF (281 aa)) is the Protein kinase domain. In terms of domain architecture, Guanylate cyclase spans 884-1014 (TLYFSDIVGF…DTVNTASRME (131 aa)).

The protein belongs to the adenylyl cyclase class-4/guanylyl cyclase family. In terms of assembly, homodimer. Interacts with RD3; promotes the exit of GUCY2F from the endoplasmic reticulum and its trafficking to the photoreceptor outer segments. There are 9 conserved cysteine residues in sensory guanylate cyclases, 6 in the extracellular domain, which may be involved in intra- or interchain disulfide bonds. Retina. Localized exclusively in the outer nuclear layer and inner segments of the rod and cone photoreceptor cells.

It localises to the photoreceptor outer segment membrane. It carries out the reaction GTP = 3',5'-cyclic GMP + diphosphate. Its activity is regulated as follows. Activated by GUCA1B when free calcium ions concentration is low, and inhibited by GUCA1B when free calcium ions concentration is high. Inhibited by RD3. Responsible for the synthesis of cyclic GMP (cGMP) in rods and cones of photoreceptors. Plays an essential role in phototransduction, by mediating cGMP replenishment. May also participate in the trafficking of membrane-asociated proteins to the photoreceptor outer segment membrane. The polypeptide is Retinal guanylyl cyclase 2 (GUCY2F) (Homo sapiens (Human)).